We begin with the raw amino-acid sequence, 480 residues long: tRNA-2-methylthio-N(6)-dimethylallyladenosine synthase (480 aa).

An MTTase N-terminal domain is found at 29-145; sequence GSFWIQTFGC…LEALLTQVDN (117 aa). 6 residues coordinate [4Fe-4S] cluster: cysteine 38, cysteine 74, cysteine 108, cysteine 180, cysteine 184, and cysteine 187. In terms of domain architecture, Radical SAM core spans 166–403; sequence RDSTICAWVN…NALVERIALQ (238 aa). In terms of domain architecture, TRAM spans 406 to 474; that stretch reads SRYSGKVEQV…AFSLSGTPCE (69 aa).

The protein belongs to the methylthiotransferase family. MiaB subfamily. As to quaternary structure, monomer. Requires [4Fe-4S] cluster as cofactor.

Its subcellular location is the cytoplasm. The enzyme catalyses N(6)-dimethylallyladenosine(37) in tRNA + (sulfur carrier)-SH + AH2 + 2 S-adenosyl-L-methionine = 2-methylsulfanyl-N(6)-dimethylallyladenosine(37) in tRNA + (sulfur carrier)-H + 5'-deoxyadenosine + L-methionine + A + S-adenosyl-L-homocysteine + 2 H(+). Catalyzes the methylthiolation of N6-(dimethylallyl)adenosine (i(6)A), leading to the formation of 2-methylthio-N6-(dimethylallyl)adenosine (ms(2)i(6)A) at position 37 in tRNAs that read codons beginning with uridine. The chain is tRNA-2-methylthio-N(6)-dimethylallyladenosine synthase from Prochlorococcus marinus (strain MIT 9313).